The following is a 118-amino-acid chain: MICOS complex subunit MIC13 (118 aa).

Residues 1 to 7 (MVARVWS) are Mitochondrial matrix-facing. The chain crosses the membrane as a helical span at residues 8 to 26 (LMRFLIKGSVAGGAVYLVY). The Mitochondrial intermembrane segment spans residues 27-118 (DQELLGPSDK…GWEYVKARTK (92 aa)).

The protein belongs to the MICOS complex subunit Mic13 family. Component of the mitochondrial contact site and cristae organizing system (MICOS) complex, composed of at least MICOS10/MIC10, CHCHD3/MIC19, CHCHD6/MIC25, APOO/MIC26, MICOS13/MIC13, APOOL/MIC27 and IMMT/MIC60. The MICOS complex associates with mitochondrial outer membrane proteins SAMM50, MTX1 and MTX2 (together described as components of the mitochondrial outer membrane sorting assembly machinery (SAM) complex) and DNAJC11, mitochondrial inner membrane protein TMEM11 and with HSPA9. The MICOS and SAM complexes together with DNAJC11 are part of a large protein complex spanning both membranes termed the mitochondrial intermembrane space bridging (MIB) complex.

The protein resides in the mitochondrion inner membrane. Functionally, component of the MICOS complex, a large protein complex of the mitochondrial inner membrane that plays crucial roles in the maintenance of crista junctions, inner membrane architecture, and formation of contact sites to the outer membrane. Constituent of mature MICOS complex, it is required for the formation of cristae junction (CJ) and maintenance of cristae morphology. Required for the incorporation of MICOS10/MIC10 into the MICOS complex. This Homo sapiens (Human) protein is MICOS complex subunit MIC13.